Consider the following 391-residue polypeptide: GTPase Obg (391 aa).

An Obg domain is found at 1–159; sequence MKFVDEASIL…RDLLLELMLL (159 aa). Residues 127–147 are disordered; the sequence is NTRFKSSVNRTPRQKTNGTPG. The segment covering 129–145 has biased composition (polar residues); the sequence is RFKSSVNRTPRQKTNGT. One can recognise an OBG-type G domain in the interval 160–333; that stretch reads ADVGMLGMPN…LCWDVMTFII (174 aa). Residues 166 to 173, 191 to 195, 213 to 216, 283 to 286, and 314 to 316 contribute to the GTP site; these read GMPNAGKS, FTTLV, DIPG, NKID, and SAA. Mg(2+)-binding residues include serine 173 and threonine 193.

The protein belongs to the TRAFAC class OBG-HflX-like GTPase superfamily. OBG GTPase family. In terms of assembly, monomer. Mg(2+) is required as a cofactor.

It localises to the cytoplasm. Functionally, an essential GTPase which binds GTP, GDP and possibly (p)ppGpp with moderate affinity, with high nucleotide exchange rates and a fairly low GTP hydrolysis rate. Plays a role in control of the cell cycle, stress response, ribosome biogenesis and in those bacteria that undergo differentiation, in morphogenesis control. This chain is GTPase Obg, found in Salmonella arizonae (strain ATCC BAA-731 / CDC346-86 / RSK2980).